A 261-amino-acid polypeptide reads, in one-letter code: Indole-3-glycerol phosphate synthase (261 aa).

It belongs to the TrpC family.

It carries out the reaction 1-(2-carboxyphenylamino)-1-deoxy-D-ribulose 5-phosphate + H(+) = (1S,2R)-1-C-(indol-3-yl)glycerol 3-phosphate + CO2 + H2O. Its pathway is amino-acid biosynthesis; L-tryptophan biosynthesis; L-tryptophan from chorismate: step 4/5. This Burkholderia ambifaria (strain ATCC BAA-244 / DSM 16087 / CCUG 44356 / LMG 19182 / AMMD) (Burkholderia cepacia (strain AMMD)) protein is Indole-3-glycerol phosphate synthase.